We begin with the raw amino-acid sequence, 33 residues long: Potassium channel toxin alpha-KTx 10.4 (33 aa).

3 disulfides stabilise this stretch: cysteine 3-cysteine 22, cysteine 8-cysteine 27, and cysteine 12-cysteine 29.

The protein belongs to the short scorpion toxin superfamily. Potassium channel inhibitor family. Alpha-KTx 10 subfamily. As to expression, expressed by the venom gland.

The protein localises to the secreted. Functionally, blocks human voltage-gated potassium channel Kv1.2/KCNA2 (IC(50)=3.6 nM) and Kv1.3/KCNA3 (IC(50)=72 nM). The protein is Potassium channel toxin alpha-KTx 10.4 of Centruroides tecomanus (Scorpion).